Reading from the N-terminus, the 474-residue chain is tRNA-2-methylthio-N(6)-dimethylallyladenosine synthase (474 aa).

One can recognise an MTTase N-terminal domain in the interval 3-120 (KKLHIKTWGC…LPEMINHVQE (118 aa)). The [4Fe-4S] cluster site is built by C12, C49, C83, C157, C161, and C164. The Radical SAM core domain maps to 143-375 (RAEGPTAFVS…QQRISQQAME (233 aa)). The region spanning 378 to 441 (RKMVGTVQRV…ASSLRGILLR (64 aa)) is the TRAM domain.

The protein belongs to the methylthiotransferase family. MiaB subfamily. As to quaternary structure, monomer. It depends on [4Fe-4S] cluster as a cofactor.

It is found in the cytoplasm. It carries out the reaction N(6)-dimethylallyladenosine(37) in tRNA + (sulfur carrier)-SH + AH2 + 2 S-adenosyl-L-methionine = 2-methylsulfanyl-N(6)-dimethylallyladenosine(37) in tRNA + (sulfur carrier)-H + 5'-deoxyadenosine + L-methionine + A + S-adenosyl-L-homocysteine + 2 H(+). Functionally, catalyzes the methylthiolation of N6-(dimethylallyl)adenosine (i(6)A), leading to the formation of 2-methylthio-N6-(dimethylallyl)adenosine (ms(2)i(6)A) at position 37 in tRNAs that read codons beginning with uridine. The protein is tRNA-2-methylthio-N(6)-dimethylallyladenosine synthase of Yersinia pseudotuberculosis serotype O:3 (strain YPIII).